The following is a 330-amino-acid chain: Ribose operon repressor (330 aa).

An HTH lacI-type domain is found at 2-56 (ATMKDVARLAGVSTSTVSHVINKDRFVSEAITAKVEAAIKELNYAPSALARSLKL). The H-T-H motif DNA-binding region spans 4–23 (MKDVARLAGVSTSTVSHVIN).

Functionally, transcriptional repressor for the ribose rbsDACBK operon. RbsR binds to a region of perfect dyad symmetry spanning the rbs operon transcriptional start site. The affinity for the rbs operator is reduced by addition of ribose, consistent with ribose being the inducer of the operon. This chain is Ribose operon repressor (rbsR), found in Escherichia coli O6:H1 (strain CFT073 / ATCC 700928 / UPEC).